The chain runs to 234 residues: Cyclin-J18 (234 aa).

This sequence belongs to the cyclin family.

This is Cyclin-J18 (CYCJ18) from Arabidopsis thaliana (Mouse-ear cress).